Here is a 235-residue protein sequence, read N- to C-terminus: 2-C-methyl-D-erythritol 4-phosphate cytidylyltransferase (235 aa).

The protein belongs to the IspD/TarI cytidylyltransferase family. IspD subfamily.

The catalysed reaction is 2-C-methyl-D-erythritol 4-phosphate + CTP + H(+) = 4-CDP-2-C-methyl-D-erythritol + diphosphate. The protein operates within isoprenoid biosynthesis; isopentenyl diphosphate biosynthesis via DXP pathway; isopentenyl diphosphate from 1-deoxy-D-xylulose 5-phosphate: step 2/6. Catalyzes the formation of 4-diphosphocytidyl-2-C-methyl-D-erythritol from CTP and 2-C-methyl-D-erythritol 4-phosphate (MEP). The sequence is that of 2-C-methyl-D-erythritol 4-phosphate cytidylyltransferase from Leptospira borgpetersenii serovar Hardjo-bovis (strain L550).